The primary structure comprises 230 residues: V-type proton ATPase subunit E (230 aa).

It belongs to the V-ATPase E subunit family. V-ATPase is a heteromultimeric enzyme composed of a peripheral catalytic V1 complex (components A to H) attached to an integral membrane V0 proton pore complex (components: a, c, c', c'' and d).

Subunit of the peripheral V1 complex of vacuolar ATPase essential for assembly or catalytic function. V-ATPase is responsible for acidifying a variety of intracellular compartments in eukaryotic cells. In Citrus unshiu (Satsuma mandarin), this protein is V-type proton ATPase subunit E (VATE).